A 379-amino-acid chain; its full sequence is Chaperone protein DnaJ (379 aa).

A J domain is found at 5 to 69; sequence EYYERLGVDK…QKRAAYDQYG (65 aa). Residues 141-223 form a CR-type zinc finger; that stretch reads GVEKQVKYNR…CHGSGHEKVA (83 aa). Zn(2+)-binding residues include cysteine 154, cysteine 157, cysteine 171, cysteine 174, cysteine 197, cysteine 200, cysteine 211, and cysteine 214. 4 CXXCXGXG motif repeats span residues 154-161, 171-178, 197-204, and 211-218; these read CHTCGGSG, CHKCGGRG, CDVCHGTG, and CTTCHGSG.

Belongs to the DnaJ family. As to quaternary structure, homodimer. It depends on Zn(2+) as a cofactor.

It is found in the cytoplasm. Participates actively in the response to hyperosmotic and heat shock by preventing the aggregation of stress-denatured proteins and by disaggregating proteins, also in an autonomous, DnaK-independent fashion. Unfolded proteins bind initially to DnaJ; upon interaction with the DnaJ-bound protein, DnaK hydrolyzes its bound ATP, resulting in the formation of a stable complex. GrpE releases ADP from DnaK; ATP binding to DnaK triggers the release of the substrate protein, thus completing the reaction cycle. Several rounds of ATP-dependent interactions between DnaJ, DnaK and GrpE are required for fully efficient folding. Also involved, together with DnaK and GrpE, in the DNA replication of plasmids through activation of initiation proteins. This chain is Chaperone protein DnaJ, found in Lactococcus lactis subsp. cremoris (strain MG1363).